The sequence spans 1046 residues: FERM, ARHGEF and pleckstrin domain-containing protein 1 (1046 aa).

Residues 40-320 (ISIKIQMLDD…EHHAFFRLFE (281 aa)) enclose the FERM domain. The segment at 374 to 522 (LTAQPSEQHA…LISPLLNDPS (149 aa)) is disordered. Positions 413-424 (KELKASTEDTGQ) are enriched in basic and acidic residues. Residues 458 to 513 (RMQQNRPQSQQPSTAGSLTGSPHLSELSINSQGGPSVANMSLSPNLSPDAKQSSPL) are compositionally biased toward polar residues. The region spanning 541-732 (KAYFIAKEVA…TEMMAQLHGN (192 aa)) is the DH domain. The region spanning 761–858 (EFIRLGSLSK…WIEDIQMAID (98 aa)) is the PH 1 domain. The interval 864 to 907 (SDPVPELLASSPPDNKSPDETTVDQESEDDLSASRTSLERQSPH) is disordered. Residues 884 to 894 (TTVDQESEDDL) show a composition bias toward acidic residues. In terms of domain architecture, PH 2 spans 933 to 1030 (ENQLSGNLLR…WMEVIRSATS (98 aa)).

Interacts with PLXNA4. In terms of tissue distribution, detected in lateral motor column motor neurons and in preganglionic autonomic motor neurons of the column of Terni in the embryonic spinal cord (at protein level).

The protein resides in the cell membrane. Its subcellular location is the synapse. It localises to the synaptosome. It is found in the cytoplasm. The protein localises to the cytosol. The protein resides in the cell projection. Its subcellular location is the filopodium. It localises to the dendrite. It is found in the dendritic spine. Its function is as follows. Functions as a guanine nucleotide exchange factor for RAC1. Plays a role in semaphorin signaling via its interaction with PLXNA4. Plays a role in the assembly and disassembly of dendritic filopodia, the formation of dendritic spines, regulation of dendrite length and ultimately the formation of synapses. The protein is FERM, ARHGEF and pleckstrin domain-containing protein 1 (FARP1) of Gallus gallus (Chicken).